Here is a 304-residue protein sequence, read N- to C-terminus: tRNA dimethylallyltransferase (304 aa).

10–17 serves as a coordination point for ATP; it reads GPTASGKT. Residue 12-17 coordinates substrate; the sequence is TASGKT. Interaction with substrate tRNA regions lie at residues 35 to 38, 159 to 163, and 240 to 245; these read DSAL, QRLSR, and RCVGYR.

The protein belongs to the IPP transferase family. As to quaternary structure, monomer. The cofactor is Mg(2+).

It carries out the reaction adenosine(37) in tRNA + dimethylallyl diphosphate = N(6)-dimethylallyladenosine(37) in tRNA + diphosphate. Its function is as follows. Catalyzes the transfer of a dimethylallyl group onto the adenine at position 37 in tRNAs that read codons beginning with uridine, leading to the formation of N6-(dimethylallyl)adenosine (i(6)A). In Shewanella putrefaciens (strain CN-32 / ATCC BAA-453), this protein is tRNA dimethylallyltransferase.